A 174-amino-acid chain; its full sequence is Large ribosomal subunit protein uL10 (174 aa).

Belongs to the universal ribosomal protein uL10 family. As to quaternary structure, part of the ribosomal stalk of the 50S ribosomal subunit. The N-terminus interacts with L11 and the large rRNA to form the base of the stalk. The C-terminus forms an elongated spine to which L12 dimers bind in a sequential fashion forming a multimeric L10(L12)X complex.

Functionally, forms part of the ribosomal stalk, playing a central role in the interaction of the ribosome with GTP-bound translation factors. The chain is Large ribosomal subunit protein uL10 from Desulfovibrio desulfuricans (strain ATCC 27774 / DSM 6949 / MB).